Consider the following 146-residue polypeptide: Anti-sigma F factor (146 aa).

The protein belongs to the anti-sigma-factor family.

It carries out the reaction L-seryl-[protein] + ATP = O-phospho-L-seryl-[protein] + ADP + H(+). The enzyme catalyses L-threonyl-[protein] + ATP = O-phospho-L-threonyl-[protein] + ADP + H(+). Binds to sigma F and blocks its ability to form an RNA polymerase holoenzyme (E-sigma F). Phosphorylates SpoIIAA on a serine residue. This phosphorylation may enable SpoIIAA to act as an anti-anti-sigma factor that counteracts SpoIIAB and thus releases sigma F from inhibition. In Bacillus subtilis (strain 168), this protein is Anti-sigma F factor (spoIIAB).